A 113-amino-acid polypeptide reads, in one-letter code: Small ribosomal subunit protein uS14m (113 aa).

The protein belongs to the universal ribosomal protein uS14 family. Component of the mitochondrial small ribosomal subunit (mt-SSU). Mature N.crassa 74S mitochondrial ribosomes consist of a small (37S) and a large (54S) subunit. The 37S small subunit contains a 16S ribosomal RNA (16S mt-rRNA) and 32 different proteins. The 54S large subunit contains a 23S rRNA (23S mt-rRNA) and 42 different proteins.

The protein localises to the mitochondrion. Functionally, component of the mitochondrial ribosome (mitoribosome), a dedicated translation machinery responsible for the synthesis of mitochondrial genome-encoded proteins, including at least some of the essential transmembrane subunits of the mitochondrial respiratory chain. The mitoribosomes are attached to the mitochondrial inner membrane and translation products are cotranslationally integrated into the membrane. The sequence is that of Small ribosomal subunit protein uS14m (mrp2) from Neurospora crassa (strain ATCC 24698 / 74-OR23-1A / CBS 708.71 / DSM 1257 / FGSC 987).